The following is a 360-amino-acid chain: Protein Wnt-2 (360 aa).

The first 25 residues, 1–25, serve as a signal peptide directing secretion; the sequence is MNAPLGGIWLWLPLLLTWLTPEVNS. 11 disulfide bridges follow: cysteine 76–cysteine 87, cysteine 127–cysteine 135, cysteine 137–cysteine 157, cysteine 206–cysteine 220, cysteine 208–cysteine 215, cysteine 278–cysteine 309, cysteine 294–cysteine 304, cysteine 308–cysteine 348, cysteine 324–cysteine 339, cysteine 326–cysteine 336, and cysteine 331–cysteine 332. The O-palmitoleoyl serine; by PORCN moiety is linked to residue serine 212. Asparagine 295 carries an N-linked (GlcNAc...) asparagine glycan.

It belongs to the Wnt family. Palmitoleoylation is required for efficient binding to frizzled receptors. Depalmitoleoylation leads to Wnt signaling pathway inhibition. As to expression, expressed in brain in the thalamus, in fetal and adult lung and in placenta.

The protein resides in the secreted. It is found in the extracellular space. It localises to the extracellular matrix. Functionally, ligand for members of the frizzled family of seven transmembrane receptors. Functions in the canonical Wnt signaling pathway that results in activation of transcription factors of the TCF/LEF family. Functions as a upstream regulator of FGF10 expression. Plays an important role in embryonic lung development. May contribute to embryonic brain development by regulating the proliferation of dopaminergic precursors and neurons. The protein is Protein Wnt-2 (WNT2) of Homo sapiens (Human).